Here is a 431-residue protein sequence, read N- to C-terminus: Serine hydroxymethyltransferase (431 aa).

(6S)-5,6,7,8-tetrahydrofolate contacts are provided by residues Leu-128 and 132–134; that span reads GHL. Position 237 is an N6-(pyridoxal phosphate)lysine (Lys-237).

Belongs to the SHMT family. As to quaternary structure, homodimer. Pyridoxal 5'-phosphate is required as a cofactor.

It is found in the cytoplasm. It catalyses the reaction (6R)-5,10-methylene-5,6,7,8-tetrahydrofolate + glycine + H2O = (6S)-5,6,7,8-tetrahydrofolate + L-serine. It participates in one-carbon metabolism; tetrahydrofolate interconversion. The protein operates within amino-acid biosynthesis; glycine biosynthesis; glycine from L-serine: step 1/1. Its function is as follows. Catalyzes the reversible interconversion of serine and glycine with tetrahydrofolate (THF) serving as the one-carbon carrier. This reaction serves as the major source of one-carbon groups required for the biosynthesis of purines, thymidylate, methionine, and other important biomolecules. Also exhibits THF-independent aldolase activity toward beta-hydroxyamino acids, producing glycine and aldehydes, via a retro-aldol mechanism. The polypeptide is Serine hydroxymethyltransferase (Ruegeria pomeroyi (strain ATCC 700808 / DSM 15171 / DSS-3) (Silicibacter pomeroyi)).